The sequence spans 202 residues: Casparian strip membrane protein 4 (202 aa).

Topologically, residues 1 to 40 (MKSDSIAVDVPAESSSAIKGKAPLLGLARDHTGSGGYKRG) are cytoplasmic. Residues 41-61 (LSIFDFLLRLAAIVAALAAAA) form a helical membrane-spanning segment. The Extracellular portion of the chain corresponds to 62–90 (TMGTSDETLPFFTQFLQFEASYDDLPTFQ). The chain crosses the membrane as a helical span at residues 91 to 111 (FFVVAIAIVTGYLVLSLPFSV). The Cytoplasmic portion of the chain corresponds to 112-130 (VTIVRPLAVAPRLLLLVLD). Residues 131–151 (TAALALDTAAASAAAAIVYLA) traverse the membrane as a helical segment. Topologically, residues 152-176 (HNGNTNTNWLPICQQFGDFCQKTSG) are extracellular. Residues 177–197 (AVVSAFASVTFLAILVVISGV) form a helical membrane-spanning segment. The Cytoplasmic segment spans residues 198–202 (SLKRP).

The protein belongs to the Casparian strip membrane proteins (CASP) family. In terms of assembly, homodimer and heterodimers.

Its subcellular location is the cell membrane. In terms of biological role, regulates membrane-cell wall junctions and localized cell wall deposition. Required for establishment of the Casparian strip membrane domain (CSD) and the subsequent formation of Casparian strips, a cell wall modification of the root endodermis that determines an apoplastic barrier between the intraorganismal apoplasm and the extraorganismal apoplasm and prevents lateral diffusion. The sequence is that of Casparian strip membrane protein 4 from Arabidopsis lyrata subsp. lyrata (Lyre-leaved rock-cress).